Here is a 485-residue protein sequence, read N- to C-terminus: Efflux pump bik6 (485 aa).

6 helical membrane-spanning segments follow: residues 42 to 62 (VYTT…SAIY), 86 to 106 (LLIF…EVYG), 108 to 128 (KWPA…TATA), 139 to 159 (FFAG…IVDI), 172 to 192 (YGIT…AFIA), and 199 to 219 (WTEY…ALWL). Residue asparagine 241 is glycosylated (N-linked (GlcNAc...) asparagine). The next 6 membrane-spanning stretches (helical) occupy residues 269-289 (MLLD…YAIL), 306-326 (WGPV…LFAA), 353-373 (LPPM…FGWT), 379-399 (SSPW…TTIF), 417-437 (AIAA…LFVW), and 447-467 (WGST…FLFF).

It belongs to the major facilitator superfamily.

It localises to the membrane. Efflux pump; part of the gene cluster that mediates the biosynthesis of bikaverin, a red pigment also considered as a mycotoxin. This is Efflux pump bik6 from Gibberella fujikuroi (strain CBS 195.34 / IMI 58289 / NRRL A-6831) (Bakanae and foot rot disease fungus).